Reading from the N-terminus, the 414-residue chain is MADSKTKKKCSFCGRSENEVGFLITGMNGYICDSCATQAYEITQEALGEGRKRAGATKLNLKELPKPVEIKKFLDQYVIGQDDAKRFLSVSVYNHYKRLLQKDSGDDVEIEKSNIIMVGSTGTGKTLLARTIAKLLHVPFTIVDATVLTEAGYVGEDIESILTRLLQVADYNVPEAEQGIVFIDEIDKIARKGDNPSITRDVSGEGVQQGLLKLLEGSVVNVPPQGGRKHPDQKMIPVNTKNILFICGGAFDGIEKKIAQRLNTHVVGYTASQKTAVIDKNNMMQYIAPQDLKSFGLIPEIIGRLPVLTYLNPLDRNALRAILTEPKNSIIKQYIKLFEMDGIKLTFEDSVFEYIVDKAVEYKLGARGLRSIVETIMMDVMFEIPSESKKEYKVTLDYAKQQLEKANMARLQIA.

The region spanning M1 to R51 is the ClpX-type ZB domain. Residues C10, C13, C32, and C35 each contribute to the Zn(2+) site. Residue S120–L127 coordinates ATP.

This sequence belongs to the ClpX chaperone family. As to quaternary structure, component of the ClpX-ClpP complex. Forms a hexameric ring that, in the presence of ATP, binds to fourteen ClpP subunits assembled into a disk-like structure with a central cavity, resembling the structure of eukaryotic proteasomes.

Functionally, ATP-dependent specificity component of the Clp protease. It directs the protease to specific substrates. Can perform chaperone functions in the absence of ClpP. The polypeptide is ATP-dependent Clp protease ATP-binding subunit ClpX (Bacteroides thetaiotaomicron (strain ATCC 29148 / DSM 2079 / JCM 5827 / CCUG 10774 / NCTC 10582 / VPI-5482 / E50)).